The primary structure comprises 190 residues: Somatotropin (190 aa).

His19 contacts Zn(2+). A disulfide bridge links Cys52 with Cys163. Glu172 contributes to the Zn(2+) binding site. A disulfide bond links Cys180 and Cys188.

Belongs to the somatotropin/prolactin family.

The protein localises to the secreted. In terms of biological role, growth hormone plays an important role in growth control and involved in the regulation of several anabolic processes. The polypeptide is Somatotropin (GH) (Crocodylus novaeguineae (Crocodile)).